The chain runs to 618 residues: Protease 4 (618 aa).

Residues 1–24 are Cytoplasmic-facing; the sequence is MRTLWRFIAGFFKWTWRVLNFVRE. Residues 25 to 45 traverse the membrane as a helical segment; the sequence is MVLNLFFIFLVLVGVGIWMQI. The Periplasmic segment spans residues 46 to 618; that stretch reads GNGSNSEQTA…AFCLTCANVR (573 aa). The active-site Proton donor/acceptor is K209. S409 (nucleophile) is an active-site residue.

This sequence belongs to the peptidase S49 family. Homotetramer.

It localises to the cell inner membrane. In terms of biological role, digests cleaved signal peptides in vitro, its in vivo function is unknown. This activity is necessary to maintain proper secretion of mature proteins across the membrane. This Salmonella typhi protein is Protease 4 (sppA).